We begin with the raw amino-acid sequence, 106 residues long: Small ribosomal subunit protein bS6 (106 aa).

The protein belongs to the bacterial ribosomal protein bS6 family.

Binds together with bS18 to 16S ribosomal RNA. The polypeptide is Small ribosomal subunit protein bS6 (Cyanothece sp. (strain PCC 7425 / ATCC 29141)).